Consider the following 660-residue polypeptide: MKTVVFAYHDMGCLGIEALLAAGYEISAIFTHTDNPGEKAFYGSVAHLAAERDIPVYAPDNVNHPLWVERIAQLSPEVIFSFYYRHLICDEIFQLAPAGAFNLHGSLLPKYRGRAPLNWVLVNGETETGVTLHRMVKRADAGAIVAQLRVAIAPDDIAITLHHKLCHAARQLLEQTLPAIKHGNILEIAQRENEATCFGRRTPDDSFLEWHKPASVLHNMVRAVADPWPGAFSYVGNQKFTVWSSRVHPHASKAQPGSVISVAPLLIACGDGALEIVTGQAGDGITMQGSQLAQMLGLVQGSRLNSQPACTARRRTRVLILGVNGFIGNHLTERLLREDHYEVYGLDIGSDAISRFLNHPHFHFVEGDISIHSEWIEYHVKKCDVVLPLVAIATPIEYTRNPLRVFELDFEENLRIIRYCVKYRKRIIFPSTSEVYGMCSDKYFDEDHSNLIVGPVNKPRWIYSVSKQLLDRVIWAYGEKEGLQFTLFLPFNWMGPRLDNLNAARIGSSRAITQLILNLVEGSPIKLIDGGKQKRCFTDIRDGIEALYHIIENAGNRCDGEIINIGNPENEASIEELGEMLLASFEKHPLRHHFPPFAGFRVVESSCYYGKGYQDVEHRKPSIRNAHRCLDWEPKIDMQETIDETLDFFLRTVDLTDKPS.

The formyltransferase ArnAFT stretch occupies residues M1–L304. Residue H86–I88 participates in (6R)-10-formyltetrahydrofolate binding. Residue H104 is the Proton donor; for formyltransferase activity of the active site. (6R)-10-formyltetrahydrofolate is bound by residues R114 and V136–D140. Positions R314–S660 are dehydrogenase ArnADH. Residues D347 and D368 to I369 each bind NAD(+). Residues A393, Y398, and T432 to S433 contribute to the UDP-alpha-D-glucuronate site. Catalysis depends on E434, which acts as the Proton acceptor; for decarboxylase activity. Residues R460, N492, K526–R535, and Y613 contribute to the UDP-alpha-D-glucuronate site. R619 (proton donor; for decarboxylase activity) is an active-site residue.

In the N-terminal section; belongs to the Fmt family. UDP-L-Ara4N formyltransferase subfamily. This sequence in the C-terminal section; belongs to the NAD(P)-dependent epimerase/dehydratase family. UDP-glucuronic acid decarboxylase subfamily. In terms of assembly, homohexamer, formed by a dimer of trimers.

The catalysed reaction is UDP-alpha-D-glucuronate + NAD(+) = UDP-beta-L-threo-pentopyranos-4-ulose + CO2 + NADH. The enzyme catalyses UDP-4-amino-4-deoxy-beta-L-arabinose + (6R)-10-formyltetrahydrofolate = UDP-4-deoxy-4-formamido-beta-L-arabinose + (6S)-5,6,7,8-tetrahydrofolate + H(+). It participates in nucleotide-sugar biosynthesis; UDP-4-deoxy-4-formamido-beta-L-arabinose biosynthesis; UDP-4-deoxy-4-formamido-beta-L-arabinose from UDP-alpha-D-glucuronate: step 1/3. The protein operates within nucleotide-sugar biosynthesis; UDP-4-deoxy-4-formamido-beta-L-arabinose biosynthesis; UDP-4-deoxy-4-formamido-beta-L-arabinose from UDP-alpha-D-glucuronate: step 3/3. Its pathway is bacterial outer membrane biogenesis; lipopolysaccharide biosynthesis. Its function is as follows. Bifunctional enzyme that catalyzes the oxidative decarboxylation of UDP-glucuronic acid (UDP-GlcUA) to UDP-4-keto-arabinose (UDP-Ara4O) and the addition of a formyl group to UDP-4-amino-4-deoxy-L-arabinose (UDP-L-Ara4N) to form UDP-L-4-formamido-arabinose (UDP-L-Ara4FN). The modified arabinose is attached to lipid A and is required for resistance to polymyxin and cationic antimicrobial peptides. This Shigella flexneri protein is Bifunctional polymyxin resistance protein ArnA.